The following is a 378-amino-acid chain: Glutamate 5-kinase (378 aa).

Lys14 is an ATP binding site. Residues Ser54, Asp141, and Asn153 each coordinate substrate. 173-174 (SD) lines the ATP pocket. A PUA domain is found at 279–356 (AGRLTVDAGA…DEISAILGYD (78 aa)).

It belongs to the glutamate 5-kinase family.

The protein localises to the cytoplasm. It carries out the reaction L-glutamate + ATP = L-glutamyl 5-phosphate + ADP. Its pathway is amino-acid biosynthesis; L-proline biosynthesis; L-glutamate 5-semialdehyde from L-glutamate: step 1/2. Functionally, catalyzes the transfer of a phosphate group to glutamate to form L-glutamate 5-phosphate. In Brucella abortus (strain S19), this protein is Glutamate 5-kinase.